Reading from the N-terminus, the 3019-residue chain is Genome polyprotein (3019 aa).

N-acetylserine; by host is present on Ser2. Residues 2–23 (STLPKPQRKTKRNTNRRPMDVK) form an interaction with STAT1 region. An interaction with EIF2AK2/PKR region spans residues 2–58 (STLPKPQRKTKRNTNRRPMDVKFPGGGQIVGGVYLLPRRGPRLGVRATRKTSERSQP). The segment at 2-59 (STLPKPQRKTKRNTNRRPMDVKFPGGGQIVGGVYLLPRRGPRLGVRATRKTSERSQPR) is interaction with DDX3X. The tract at residues 2–75 (STLPKPQRKT…PKARQPQGRH (74 aa)) is disordered. Over 2–168 (STLPKPQRKT…EDGINYATGN (167 aa)) the chain is Cytoplasmic. Short sequence motifs (nuclear localization signal) lie at residues 5–13 (PKPQRKTKR) and 38–43 (PRRGPR). The span at 7 to 16 (PQRKTKRNTN) shows a compositional bias: basic residues. The segment covering 32–47 (GGVYLLPRRGPRLGVR) has biased composition (low complexity). Ser53 is modified (phosphoserine; by host). 2 short sequence motifs (nuclear localization signal) span residues 58–64 (PRGRRQP) and 66–71 (PKARQP). Position 99 is a phosphoserine; by host (Ser99). Positions 112 to 152 (PRRRSRNLGKVIDTLTCGFADLMGYIPVVGAPLGGVAAALA) are important for endoplasmic reticulum and mitochondrial localization. Ser116 bears the Phosphoserine; by host PKA mark. The interval 122-173 (VIDTLTCGFADLMGYIPVVGAPLGGVAAALAHGVRAIEDGINYATGNLPGCS) is interaction with APOA2. The segment at 164-167 (YATG) is important for lipid droplets localization. Residues 169-189 (LPGCSFSIFLLALLSCLTTPA) traverse the membrane as a helical segment. Positions 178–191 (LLALLSCLTTPASA) are cleaved as a propeptide — ER anchor for the core protein, removed in mature form by host signal peptidase. Residues 190 to 358 (SALTYGNSSG…FGGHWGILLA (169 aa)) lie on the Lumenal side of the membrane. Asn196, Asn209, Asn234, and Asn250 each carry an N-linked (GlcNAc...) asparagine; by host glycan. The segment at 265–296 (LAGAAVVCSSLYIGDLCGSLFLAGQLFTFQPR) is important for fusion. The N-linked (GlcNAc...) asparagine; by host glycan is linked to Asn305. A helical transmembrane segment spans residues 359–379 (VAYFGMAGNWLKVLAVLFLFA). The Lumenal segment spans residues 380–730 (GVEATTTVGH…WEYIVLMFLV (351 aa)). An HVR1 region spans residues 385–411 (TTVGHGVARTTAGITGLFSPGASQNLQ). Asn415 is a glycosylation site (N-linked (GlcNAc...) asparagine; by host). N-linked (GlcNAc...) (high mannose) asparagine; by host glycosylation is found at Asn422 and Asn429. Cystine bridges form between Cys428–Cys553, Cys451–Cys458, Cys487–Cys495, and Cys504–Cys509. A glycan (N-linked (GlcNAc...) asparagine; by host) is linked at Asn447. The tract at residues 474–479 (KVNISG) is HVR2. A glycan (N-linked (GlcNAc...) asparagine; by host) is linked at Asn476. The tract at residues 481–494 (SDDRPYCWHYAPRP) is CD81-binding 1. N-linked (GlcNAc...) asparagine; by host glycosylation occurs at Asn533. The interval 545–552 (PPTGGWFG) is CD81-binding 2. Asn557 carries N-linked (GlcNAc...) asparagine; by host glycosylation. Residues Cys565 and Cys570 are joined by a disulfide bond. The N-linked (GlcNAc...) asparagine; by host glycan is linked to Asn578. 3 disulfide bridges follow: Cys586/Cys590, Cys602/Cys625, and Cys612/Cys649. Residues Asn628 and Asn650 are each glycosylated (N-linked (GlcNAc...) (high mannose) asparagine; by host). Cys657 and Cys682 are disulfide-bonded. Residues 665–676 (IEMSPLLFSTTQ) are PKR/eIF2-alpha phosphorylation homology domain (PePHD). The chain crosses the membrane as a helical span at residues 731 to 751 (LADARICTCLWLMLLISNVEA). At 752-762 (AVERLVVLNAA) the chain is on the lumenal side. A helical transmembrane segment spans residues 763-783 (SAAGTAGWWWAVLFLCCVWYV). At 784 to 786 (KGR) the chain is on the cytoplasmic side. A helical transmembrane segment spans residues 787–808 (LVPACTYMALGMWPLLLTILAL). Topologically, residues 809–818 (PHRAYAMDNE) are lumenal. A helical membrane pass occupies residues 819–839 (QAASLGAVGLLAITIFTITPT). Residues 840 to 843 (YKKL) lie on the Cytoplasmic side of the membrane. Residues 844 to 863 (LTCFIWWNQYFLARAEAMVH) traverse the membrane as a helical segment. Topologically, residues 864-886 (EWVPDLRVRGGRDSIILLTCLLH) are lumenal. The chain crosses the membrane as a helical span at residues 887 to 907 (PQLGFEVTKILLAILAPLYIL). Residues 908-1031 (QYSLLKVPYF…DMQRGGWKLL (124 aa)) enclose the Peptidase C18 domain. At 908 to 1662 (QYSLLKVPYF…CMSADLEVIT (755 aa)) the chain is on the cytoplasmic side. The interval 909-1211 (YSLLKVPYFV…PVENMETTMR (303 aa)) is protease NS2-3. The S-palmitoyl cysteine; by host moiety is linked to residue Cys927. The tract at residues 934-954 (AGGRYVQACLLRLGAWTGTFI) is interaction with host SCPS1. Active-site for protease NS2 activity; shared with dimeric partner residues include His957, Glu977, and Cys998. In terms of domain architecture, Peptidase S29 spans 1032-1213 (APITAYAQQT…ENMETTMRSP (182 aa)). Catalysis depends on charge relay system; for serine protease NS3 activity residues His1088 and Asp1112. 2 residues coordinate Zn(2+): Cys1128 and Cys1130. The active-site Charge relay system; for serine protease NS3 activity is the Ser1170. The Zn(2+) site is built by Cys1176 and His1180. Positions 1222-1374 (PAVPQTYQVG…PNITETALPT (153 aa)) constitute a Helicase ATP-binding domain. 1235 to 1242 (APTGSGKS) lines the ATP pocket. Residues Ser1242 and Glu1322 each coordinate Mg(2+). The short motif at 1321-1324 (DECH) is the DECH box element. Residues 1491-1503 (QRRGRTGRGKPGV) form an RNA-binding region. A helical transmembrane segment spans residues 1663 to 1683 (STWVLVGGVLAALAAYCLSVG). The segment at 1684 to 1695 (CVVICGRITLTG) is NS3-binding. Residues 1684–1810 (CVVICGRITL…SLTSPLRTSQ (127 aa)) are Cytoplasmic-facing. The helical transmembrane segment at 1811–1829 (TLLLNILGGWIAAQVAPPP) threads the bilayer. Topologically, residues 1830–1833 (ASTA) are lumenal. The chain crosses the membrane as a helical span at residues 1834-1854 (FVVSGLAGAAVGSIRLGRVLV). Asp1855 is a topological domain (cytoplasmic). The chain crosses the membrane as a helical span at residues 1856 to 1876 (VLAGYGAGVSGALVAFKIMSG). At 1877 to 1886 (DCPTTEDMVN) the chain is on the lumenal side. A helical transmembrane segment spans residues 1887–1907 (LLPALLSPGALVVGVVCAAIL). Over 1908 to 1977 (RRHVGPAEGA…WVNEDTATPC (70 aa)) the chain is Cytoplasmic. Cys1977 carries the S-palmitoyl cysteine; by host lipid modification. An intramembrane segment occupies 1978–2007 (ATSWLRDVWDWVCTVLSDFKVWLQAKLFPR). At 2008–2998 (LPGIPFLSCQ…YHSVSQARPR (991 aa)) the chain is on the cytoplasmic side. Residues Cys2016, Cys2034, Cys2036, and Cys2057 each contribute to the Zn(2+) site. An FKBP8-binding region spans residues 2125 to 2213 (EFFTEVDGVR…ASSSASQLSA (89 aa)). The tract at residues 2125–2338 (EFFTEVDGVR…PIPPPRRKRL (214 aa)) is transcriptional activation. The segment at 2140-2144 (PPCKP) is interaction with non-structural protein 4A. The disordered stretch occupies residues 2189–2223 (ETASRRLKRGSPPSLASSSASQLSAPSLKATCTTS). The segment at 2194–2446 (RLKRGSPPSL…ALITPCAAEE (253 aa)) is interaction with host SKP2. Ser2199 carries the post-translational modification Phosphoserine; by host; in p56. The span at 2199–2216 (SPPSLASSSASQLSAPSL) shows a compositional bias: low complexity. Phosphoserine; by host; in p58 occurs at positions 2202, 2206, 2209, 2212, and 2215. The interval 2215–2254 (SLKATCTTSKDHPDMELIEANLLWRQEMGGNITRVESENK) is ISDR. The interval 2215 to 2280 (SLKATCTTSK…REISVSAECH (66 aa)) is interaction with EIF2AK2/PKR. The NS4B-binding stretch occupies residues 2254–2312 (KVVVLDSFEPLTAEYDEREISVSAECHRPPRHKFPPALPIWARPDYNPPLLQAWQMPGY). Positions 2305–2383 (QAWQMPGYEP…SITSPDPPAP (79 aa)) are V3. Residues 2328-2331 (APIP) carry the SH3-binding motif. Residues 2333–2341 (PRRKRLVHL) carry the Nuclear localization signal motif. Lys2356 is covalently cross-linked (Glycyl lysine isopeptide (Lys-Gly) (interchain with G-Cter in ubiquitin)). Residues 2359-2418 (VEGSSDPGPSSDSGLSITSPDPPAPTTPDDACSEAESYSSMPPLEGEPGDPDLSSGSWST) are disordered. The segment covering 2361 to 2372 (GSSDPGPSSDSG) has biased composition (low complexity). Phosphoserine; by host is present on residues Ser2457 and Ser2470. One can recognise a RdRp catalytic domain in the interval 2642–2760 (PMGFSYDTRC…ICESAGVQED (119 aa)). Residues Asp2648, Asp2746, and Asp2747 each contribute to the Mg(2+) site. A helical transmembrane segment spans residues 2999–3019 (LLLLGLLLLTVGVGIFLVPAR).

The protein belongs to the hepacivirus polyprotein family. Homooligomer. Interacts with E1 (via C-terminus). Interacts with the non-structural protein 5A. Interacts (via N-terminus) with host STAT1 (via SH2 domain); this interaction results in decreased STAT1 phosphorylation and ubiquitin-mediated proteasome-dependent STAT1 degradation, leading to decreased IFN-stimulated gene transcription. Interacts with host STAT3; this interaction constitutively activates STAT3. Interacts with host LTBR receptor. Interacts with host TNFRSF1A receptor and possibly induces apoptosis. Interacts with host HNRPK. Interacts with host YWHAE. Interacts with host UBE3A/E6AP. Interacts with host DDX3X. Interacts with host APOA2. Interacts with host RXRA protein. Interacts with host SP110 isoform 3/Sp110b; this interaction sequesters the transcriptional corepressor SP110 away from the nucleus. Interacts with host CREB3 nuclear transcription protein; this interaction triggers cell transformation. Interacts with host ACY3. Interacts with host C1QR1. Interacts with host RBM24; this interaction, which enhances the interaction of the mature core protein with 5'-UTR, may inhibit viral translation and favor replication. Interacts with host EIF2AK2/PKR; this interaction induces the autophosphorylation of EIF2AK2. Part of the viral assembly initiation complex composed of NS2, E1, E2, NS3, NS4A, NS5A and the mature core protein. As to quaternary structure, forms a heterodimer with envelope glycoprotein E2. Interacts with mature core protein. Interacts with protease NS2. The heterodimer E1/E2 interacts with host CLDN1; this interaction plays a role in viral entry into host cell. Interacts with host SPSB2 (via C-terminus). Part of the viral assembly initiation complex composed of NS2, E1, E2, NS3, NS4A, NS5A and the mature core protein. Interacts with host NEURL3; this interaction prevents E1 binding to glycoprotein E2. In terms of assembly, forms a heterodimer with envelope glycoprotein E1. Interacts with host CD81 and SCARB1 receptors; these interactions play a role in viral entry into host cell. Interacts with host EIF2AK2/PKR; this interaction inhibits EIF2AK2 and probably allows the virus to evade the innate immune response. Interacts with host CD209/DC-SIGN and CLEC4M/DC-SIGNR. Interact with host SPCS1; this interaction is essential for viral particle assembly. Interacts with protease NS2. The heterodimer E1/E2 interacts with host CLDN1; this interaction plays a role in viral entry into host cell. Part of the viral assembly initiation complex composed of NS2, E1, E2, NS3, NS4A, NS5A and the mature core protein. Interacts with host SLC3A2/4F2hc; the interaction may facilitate viral entry into host cell. Interacts with human PLSCR1. Homohexamer. Homoheptamer. Interacts with protease NS2. As to quaternary structure, homodimer. Interacts with host SPCS1; this interaction is essential for viral particle assembly. Interacts with envelope glycoprotein E1. Interacts with envelope glycoprotein E2. Interacts with viroporin p7. Interacts with serine protease/helicase NS3. Part of the replication complex composed of NS2, NS3, NS4A, NS4B, NS5A and the RNA-directed RNA polymerase embedded in an ER-derived membranous web. Part of the viral assembly initiation complex composed of NS2, E1, E2, NS3, NS4A, NS5A and the mature core protein. In terms of assembly, interacts with protease NS2. Interacts with non-structural protein 4A; this interaction stabilizes the folding of NS3 serine protease. NS3-NS4A interaction is essential for NS3 activation and allows membrane anchorage of the latter. NS3/NS4A complex also prevents phosphorylation of host IRF3, thus preventing the establishment of dsRNA induced antiviral state. Interacts with host MAVS; this interaction leads to the cleavage and inhibition of host MAVS. Interacts with host TICAM1; this interaction leads to the cleavage and inhibition of host TICAM1. Interacts with host TANK-binding kinase/TBK1; this interaction results in the inhibition of the association between TBK1 and IRF3, which leads to the inhibition of IRF3 activation. Interacts with host RBM24. Part of the replication complex composed of NS2, NS3, NS4A, NS4B, NS5A and the RNA-directed RNA polymerase embedded in an ER-derived membranous web. Part of the viral assembly initiation complex composed of NS2, E1, E2, NS3, NS4A, NS5A and the mature core protein. Interacts with NS3 serine protease; this interaction stabilizes the folding of NS3 serine protease. NS3-NS4A interaction is essential for NS3 activation and allows membrane anchorage of the latter. Interacts with non-structural protein 5A (via N-terminus). Part of the replication complex composed of NS2, NS3, NS4A, NS4B, NS5A and the RNA-directed RNA polymerase embedded in an ER-derived membranous web. Part of the viral assembly initiation complex composed of NS2, E1, E2, NS3, NS4A, NS5A and the mature core protein. As to quaternary structure, homomultimer. Interacts with non-structural protein NS5A. Interacts with host PLA2G4C; this interaction likely initiates the recruitment of replication complexes to lipid droplets. Interacts with host STING; this interaction disrupts the interaction between STING and TBK1 thereby suppressing the interferon signaling. Part of the replication complex composed of NS2, NS3, NS4A, NS4B, NS5A and the RNA-directed RNA polymerase embedded in an ER-derived membranous web. In terms of assembly, monomer. Homodimer; dimerization is required for RNA-binding. Interacts with the mature core protein. Interacts (via N-terminus) with non-structural protein 4A. Interacts with non-structural protein 4B. Interacts (via region D2) with RNA-directed RNA polymerase. Part of the viral assembly initiation complex composed of NS2, E1, E2, NS3, NS4A, NS5A and the mature core protein. Part of the replication complex composed of NS2, NS3, NS4A, NS4B, NS5A and the RNA-directed RNA polymerase embedded in an ER-derived membranous web. Interacts with host GRB2. Interacts with host BIN1. Interacts with host PIK3R1. Interacts with host SRCAP. Interacts with host FKBP8. Interacts (via C-terminus) with host VAPB (via MSP domain). Interacts with host EIF2AK2/PKR; this interaction leads to disruption of EIF2AK2 dimerization by NS5A and probably allows the virus to evade the innate immune response. Interacts (via N-terminus) with host PACSIN2 (via N-terminus); this interaction attenuates protein kinase C alpha-mediated phosphorylation of PACSIN2 by disrupting the interaction between PACSIN2 and PRKCA. Interacts (via N-terminus) with host SRC kinase (via SH2 domain). Interacts with most Src-family kinases. Interacts with host IFI27 and SKP2; promotes the ubiquitin-mediated proteasomal degradation of NS5A. Interacts with host GPS2. Interacts with host TNFRSF21; this interaction allows the modulation by the virus of JNK, p38 MAPK, STAT3, and Akt signaling pathways in a DR6-dependent manner. Interacts (via N-terminus) with host CIDEB (via N-terminus); this interaction seems to regulate the association of HCV particles with APOE. Interacts with host CHKA/Choline Kinase-alpha; CHKA bridges host PI4KA and NS5A and potentiates NS5A-stimulated PI4KA activity, which then facilitates the targeting of the ternary complex to the ER for viral replication. Interacts with host SPSB2 (via C-terminus); this interaction targets NS5A for ubiquitination and degradation. Interacts with host RAB18; this interaction may promote the association of NS5A and other replicase components with lipid droplets. Interacts (via region D2) with host PPIA/CYPA; the interaction stimulates RNA-binding ability of NS5A and is dependent on the peptidyl-prolyl cis-trans isomerase activity of PPIA/CYPA. Interacts with host TRIM14; this interaction induces the degradation of NS5A. Homooligomer. Interacts with non-structural protein 5A. Interacts with host VAPB. Interacts with host PRK2/PKN2. Interacts with host HNRNPA1 and SEPT6; these interactions facilitate viral replication. Part of the replication complex composed of NS2, NS3, NS4A, NS4B, NS5A and the RNA-directed RNA polymerase. Zn(2+) is required as a cofactor. Mg(2+) serves as cofactor. In terms of processing, specific enzymatic cleavages in vivo yield mature proteins. The structural proteins, core, E1, E2 and p7 are produced by proteolytic processing by host signal peptidases. The core protein precursor is synthesized as a 23 kDa, which is retained in the ER membrane through the hydrophobic signal peptide. Cleavage by the signal peptidase releases the 21 kDa mature core protein. The cleavage of the core protein precursor occurs between aminoacids 176 and 188 but the exact cleavage site is not known. Some degraded forms of the core protein appear as well during the course of infection. The other proteins (p7, NS2, NS3, NS4A, NS4B, NS5A and NS5B) are cleaved by the viral proteases. Autoprocessing between NS2 and NS3 is mediated by the NS2 cysteine protease catalytic domain and regulated by the NS3 N-terminal domain. Post-translationally, phosphorylated by host PKC and PKA. Ubiquitinated; mediated by UBE3A and leading to core protein subsequent proteasomal degradation. In terms of processing, highly N-glycosylated. Post-translationally, palmitoylation is required for NS2/3 autoprocessing and E2 recruitment to membranes. Palmitoylated. This modification may play a role in its polymerization or in protein-protein interactions. In terms of processing, phosphorylated on serines in a basal form termed p56. p58 is a hyperphosphorylated form of p56. p56 and p58 coexist in the cell in roughly equivalent amounts. Hyperphosphorylation is dependent on the presence of NS4A. Host CSNK1A1/CKI-alpha or RPS6KB1 kinases may be responsible for NS5A phosphorylation. Post-translationally, tyrosine phosphorylation is essential for the interaction with host SRC. The N-terminus is phosphorylated by host PRK2/PKN2.

Its subcellular location is the host endoplasmic reticulum membrane. The protein localises to the host mitochondrion membrane. It localises to the virion. It is found in the host cytoplasm. The protein resides in the host nucleus. Its subcellular location is the host lipid droplet. The protein localises to the virion membrane. It localises to the host mitochondrion. It is found in the host cell membrane. The protein resides in the host perinuclear region. It carries out the reaction Hydrolysis of four peptide bonds in the viral precursor polyprotein, commonly with Asp or Glu in the P6 position, Cys or Thr in P1 and Ser or Ala in P1'.. The catalysed reaction is a ribonucleoside 5'-triphosphate + H2O = a ribonucleoside 5'-diphosphate + phosphate + H(+). It catalyses the reaction ATP + H2O = ADP + phosphate + H(+). The enzyme catalyses RNA(n) + a ribonucleoside 5'-triphosphate = RNA(n+1) + diphosphate. Its activity is regulated as follows. Inhibited by the antiviral drug hexamethylene amiloride. Inhibition by amantadine appears to be genotype-dependent. Also inhibited by long-alkyl-chain iminosugar derivatives. With respect to regulation, activity is up-regulated by PRK2/PKN2-mediated phosphorylation. Packages viral RNA to form a viral nucleocapsid, and promotes virion budding. Participates in the viral particle production as a result of its interaction with the non-structural protein 5A. Binds RNA and may function as a RNA chaperone to induce the RNA structural rearrangements taking place during virus replication. Modulates viral translation initiation by interacting with viral IRES and 40S ribosomal subunit. Affects various cell signaling pathways, host immunity and lipid metabolism. Prevents the establishment of cellular antiviral state by blocking the interferon-alpha/beta (IFN-alpha/beta) and IFN-gamma signaling pathways and by blocking the formation of phosphorylated STAT1 and promoting ubiquitin-mediated proteasome-dependent degradation of STAT1. Activates STAT3 leading to cellular transformation. Regulates the activity of cellular genes, including c-myc and c-fos. May repress the promoter of p53, and sequester CREB3 and SP110 isoform 3/Sp110b in the cytoplasm. Represses cell cycle negative regulating factor CDKN1A, thereby interrupting an important check point of normal cell cycle regulation. Targets transcription factors involved in the regulation of inflammatory responses and in the immune response: suppresses TNF-induced NF-kappa-B activation, and activates AP-1. Binds to dendritic cells (DCs) via C1QR1, resulting in down-regulation of T-lymphocytes proliferation. Alters lipid metabolism by interacting with hepatocellular proteins involved in lipid accumulation and storage. Induces up-regulation of FAS promoter activity, and thereby contributes to the increased triglyceride accumulation in hepatocytes (steatosis). Functionally, forms a heterodimer with envelope glycoprotein E2, which mediates virus attachment to the host cell, virion internalization through clathrin-dependent endocytosis and fusion with host membrane. Fusion with the host cell is most likely mediated by both E1 and E2, through conformational rearrangements of the heterodimer required for fusion rather than a classical class II fusion mechanism. E1/E2 heterodimer binds host apolipoproteins such as APOB and ApoE thereby forming a lipo-viro-particle (LVP). APOE associated to the LVP allows the initial virus attachment to cell surface receptors such as the heparan sulfate proteoglycans (HSPGs), syndecan-1 (SDC1), syndecan-1 (SDC2), the low-density lipoprotein receptor (LDLR) and scavenger receptor class B type I (SCARB1). The cholesterol transfer activity of SCARB1 allows E2 exposure and binding of E2 to SCARB1 and the tetraspanin CD81. E1/E2 heterodimer binding on CD81 activates the epithelial growth factor receptor (EGFR) signaling pathway. Diffusion of the complex E1-E2-EGFR-SCARB1-CD81 to the cell lateral membrane allows further interaction with Claudin 1 (CLDN1) and occludin (OCLN) to finally trigger HCV entry. Its function is as follows. Forms a heterodimer with envelope glycoprotein E1, which mediates virus attachment to the host cell, virion internalization through clathrin-dependent endocytosis and fusion with host membrane. Fusion with the host cell is most likely mediated by both E1 and E2, through conformational rearrangements of the heterodimer required for fusion rather than a classical class II fusion mechanism. The interaction between envelope glycoprotein E2 and host apolipoprotein E/APOE allows the proper assembly, maturation and infectivity of the viral particles. This interaction is probably promoted via the up-regulation of cellular autophagy by the virus. E1/E2 heterodimer binds host apolipoproteins such as APOB and APOE thereby forming a lipo-viro-particle (LVP). APOE associated to the LVP allows the initial virus attachment to cell surface receptors such as the heparan sulfate proteoglycans (HSPGs), syndecan-1 (SDC1), syndecan-1 (SDC2), the low-density lipoprotein receptor (LDLR) and scavenger receptor class B type I (SCARB1). The cholesterol transfer activity of SCARB1 allows E2 exposure and binding of E2 to SCARB1 and the tetraspanin CD81. E1/E2 heterodimer binding on CD81 activates the epithelial growth factor receptor (EGFR) signaling pathway. Diffusion of the complex E1-E2-EGFR-SCARB1-CD81 to the cell lateral membrane allows further interaction with Claudin 1 (CLDN1) and occludin (OCLN) to finally trigger HCV entry. Inhibits host EIF2AK2/PKR activation, preventing the establishment of an antiviral state. Viral ligand for CD209/DC-SIGN and CLEC4M/DC-SIGNR, which are respectively found on dendritic cells (DCs), and on liver sinusoidal endothelial cells and macrophage-like cells of lymph node sinuses. These interactions allow the capture of circulating HCV particles by these cells and subsequent facilitated transmission to permissive cells such as hepatocytes and lymphocyte subpopulations. The interaction between E2 and host amino acid transporter complex formed by SLC3A2 and SLC7A5/LAT1 may facilitate viral entry into host cell. In terms of biological role, ion channel protein that acts as a viroporin and plays an essential role in the assembly, envelopment and secretion of viral particles. Regulates the host cell secretory pathway, which induces the intracellular retention of viral glycoproteins and favors assembly of viral particles. Creates a pore in acidic organelles and releases Ca(2+) and H(+) in the cytoplasm of infected cells, leading to a productive viral infection. High levels of cytoplasmic Ca(2+) may trigger membrane trafficking and transport of viral ER-associated proteins to viroplasms, sites of viral genome replication. This ionic imbalance induces the assembly of the inflammasome complex, which triggers the maturation of pro-IL-1beta into IL-1beta through the action of caspase-1. Targets also host mitochondria and induces mitochondrial depolarization. In addition of its role as a viroporin, acts as a lipid raft adhesion factor. Cysteine protease required for the proteolytic auto-cleavage between the non-structural proteins NS2 and NS3. The N-terminus of NS3 is required for the function of NS2 protease (active region NS2-3). Promotes the initiation of viral particle assembly by mediating the interaction between structural and non-structural proteins. Functionally, displays three enzymatic activities: serine protease with a chymotrypsin-like fold, NTPase and RNA helicase. NS3 serine protease, in association with NS4A, is responsible for the cleavages of NS3-NS4A, NS4A-NS4B, NS4B-NS5A and NS5A-NS5B. The NS3/NS4A complex prevents phosphorylation of host IRF3, thus preventing the establishment of dsRNA induced antiviral state. The NS3/NS4A complex induces host amino acid transporter component SLC3A2, thus contributing to HCV propagation. NS3 RNA helicase binds to RNA and unwinds both dsDNA and dsRNA in the 3' to 5' direction, and likely resolves RNA complicated stable secondary structures in the template strand. Binds a single ATP and catalyzes the unzipping of a single base pair of dsRNA. Inhibits host antiviral proteins TBK1 and IRF3 thereby preventing the establishment of an antiviral state. Cleaves host MAVS/CARDIF thereby preventing the establishment of an antiviral state. Cleaves host TICAM1/TRIF, thereby disrupting TLR3 signaling and preventing the establishment of an antiviral state. Its function is as follows. Induces a specific membrane alteration that serves as a scaffold for the virus replication complex. This membrane alteration gives rise to the so-called ER-derived membranous web that contains the replication complex. NS4B self-interaction contributes to its function in membranous web formation. Promotes host TRIF protein degradation in a CASP8-dependent manner thereby inhibiting host TLR3-mediated interferon signaling. Disrupts the interaction between STING and TBK1 contributing to the inhibition of interferon signaling. In terms of biological role, phosphorylated protein that is indispensable for viral replication and assembly. Both hypo- and hyperphosphorylated states are required for the viral life cycle. The hyperphosphorylated form of NS5A is an inhibitor of viral replication. Involved in RNA-binding and especially in binding to the viral genome. Zinc is essential for RNA-binding. Participates in the viral particle production as a result of its interaction with the mature viral core protein. Its interaction with host VAPB may target the viral replication complex to vesicles. Down-regulates viral IRES translation initiation. Mediates interferon resistance, presumably by interacting with and inhibiting host EIF2AK2/PKR. Prevents BIN1-induced apoptosis. Acts as a transcriptional activator of some host genes important for viral replication when localized in the nucleus. Via the interaction with host PACSIN2, modulates lipid droplet formation in order to promote virion assembly. Modulates TNFRSF21/DR6 signaling pathway for viral propagation. RNA-dependent RNA polymerase that performs primer-template recognition and RNA synthesis during viral replication. Initiates RNA transcription/replication at a flavin adenine dinucleotide (FAD), resulting in a 5'- FAD cap on viral RNAs. In this way, recognition of viral 5' RNA by host pattern recognition receptors can be bypassed, thereby evading activation of antiviral pathways. In Hepatitis C virus genotype 6a (isolate 6a33) (HCV), this protein is Genome polyprotein.